The sequence spans 105 residues: Large ribosomal subunit protein uL24 (105 aa).

It belongs to the universal ribosomal protein uL24 family. In terms of assembly, part of the 50S ribosomal subunit.

In terms of biological role, one of two assembly initiator proteins, it binds directly to the 5'-end of the 23S rRNA, where it nucleates assembly of the 50S subunit. Functionally, one of the proteins that surrounds the polypeptide exit tunnel on the outside of the subunit. This is Large ribosomal subunit protein uL24 from Francisella philomiragia subsp. philomiragia (strain ATCC 25017 / CCUG 19701 / FSC 153 / O#319-036).